The primary structure comprises 660 residues: Pro-secreted protein ORF2 (660 aa).

Residues 1 to 19 (MGPRPILLLFLMFLPMLLA) form the signal peptide. Disordered regions lie at residues 20-43 (PPPG…GFWG) and 66-127 (VTAA…DVDS). A Nuclear localization signal motif is present at residues 28 to 33 (RRRGRR). The span at 92 to 116 (QRPAAASRRRPTTAGAAPLTAVAPA) shows a compositional bias: low complexity. N-linked (GlcNAc...) asparagine; by host glycans are attached at residues N137 and N310. A particle formation region spans residues 368-394 (IALTLFNLADTLLGGLPTELISSAGGQ). The N-linked (GlcNAc...) asparagine; by host glycan is linked to N562. The segment at 585-610 (TTSLGAGPVSISAVAVLGPHSALALL) is oligomerization.

Belongs to the hepevirus capsid protein family. As to quaternary structure, homodimer. In terms of assembly, self-assembles to form the capsid. The capsid is dominated by dimers that define the 30 morphological units. Interacts with phosphorylated protein ORF3. Interacts with host TMEM134. Interacts with host ASGR1 and ASGR2; these interactions facilitate infection of host hepatocytes. Post-translationally, cleaved by host protease in the N-terminus. N-glycosylated. In terms of processing, not N-glycosylated. The C-terminus of the capsid protein ORF2 is truncated in non-enveloped virions shedded in feces, probably due to host proteases.

The protein resides in the secreted. The protein localises to the virion. It is found in the host cytoplasm. It localises to the host endoplasmic reticulum. Its subcellular location is the host Golgi apparatus. The protein resides in the host cell surface. Functionally, plays a role in the inhibition of host antibody-mediated neutralization without blocking viral cell entry. Forms an icosahedral capsid with a T=1 symmetry and a 34 nm diameter. The capsid is composed of 60 copies linked to each other. Binds to the 5' end of the genomic RNA to mediate genome encapsidation. Binds to heparin surface proteoglycans (HSPGs) to mediate viral entry. Additionally, the interactions with host ASGR1 and ASGR2 facilitate viral infection of hepatocytes. Inhibits IFN production by blocking host TBK1-induced IRF3 phosphorylation. The nuclear form probably modulates host gene expression. In Bandicota bengalensis (lesser bandicoot rat), this protein is Pro-secreted protein ORF2.